Consider the following 361-residue polypeptide: MATPVVSASGPPATPAPAPVAAPASASASVPAPTPAPAAAAVPAAAPAASSDPAAAAATTAAPGQTPASAQAPAQTPAPALPGPALPGPFPGGRVVRLHPVILASIVDSYERRNEGAARVIGTLLGTVDKHSVEVTNCFSVPHNESEDEVAVDMEFAKNMYELHKKVSPNELILGWYATGHDITEHSVLIHEYYSREAPNPIHLTVDTSLQNGRMSIKAYVSTLMGVPGRTMGVMFTPLTVKYAYYDTERIGVDLIMKTCFSPNRVIGLSSDLQQVGGASARIQDALSTVLQYAEDVLSGKVSADNTVGRFLMSLVNQVPKIVPDDFETMLNSNINDLLMVTYLANLTQSQIALNEKLVNL.

Low complexity-rich tracts occupy residues 1–11 and 21–42; these read MATPVVSASGP and AAPASASASVPAPTPAPAAAAV. The disordered stretch occupies residues 1–42; sequence MATPVVSASGPPATPAPAPVAAPASASASVPAPTPAPAAAAV. Alanine 2 bears the N-acetylalanine mark. Phosphoserine; by CDK11; in vitro is present on serine 50. Low complexity predominate over residues 55–78; sequence AAAATTAAPGQTPASAQAPAQTPA. The segment at 55–86 is disordered; sequence AAAATTAAPGQTPASAQAPAQTPAPALPGPAL. The MPN domain maps to 96-226; the sequence is VRLHPVILAS…IKAYVSTLMG (131 aa). Lysine 242 carries the post-translational modification N6-acetyllysine. Serine 262 carries the phosphoserine modification.

It belongs to the eIF-3 subunit F family. Component of the eukaryotic translation initiation factor 3 (eIF-3) complex, which is composed of 13 subunits: EIF3A, EIF3B, EIF3C, EIF3D, EIF3E, EIF3F, EIF3G, EIF3H, EIF3I, EIF3J, EIF3K, EIF3L and EIF3M. The eIF-3 complex appears to include 3 stable modules: module A is composed of EIF3A, EIF3B, EIF3G and EIF3I; module B is composed of EIF3F, EIF3H, and EIF3M; and module C is composed of EIF3C, EIF3D, EIF3E, EIF3K and EIF3L. EIF3C of module C binds EIF3B of module A and EIF3H of module B, thereby linking the three modules. EIF3J is a labile subunit that binds to the eIF-3 complex via EIF3B. The eIF-3 complex interacts with RPS6KB1 under conditions of nutrient depletion. Mitogenic stimulation leads to binding and activation of a complex composed of MTOR and RPTOR, leading to phosphorylation and release of RPS6KB1 and binding of EIF4B to eIF-3. Interacts with RNF139; the interaction leads to protein translation inhibitions in a ubiquitination-dependent manner. Interacts with DTX1, the interaction is required for deubiquitinating activity towards NOTCH1. Phosphorylation is enhanced upon serum stimulation. Phosphorylated during apoptosis by caspase-processed CDK11.

Its subcellular location is the cytoplasm. It catalyses the reaction Thiol-dependent hydrolysis of ester, thioester, amide, peptide and isopeptide bonds formed by the C-terminal Gly of ubiquitin (a 76-residue protein attached to proteins as an intracellular targeting signal).. Functionally, component of the eukaryotic translation initiation factor 3 (eIF-3) complex, which is required for several steps in the initiation of protein synthesis. The eIF-3 complex associates with the 40S ribosome and facilitates the recruitment of eIF-1, eIF-1A, eIF-2:GTP:methionyl-tRNAi and eIF-5 to form the 43S pre-initiation complex (43S PIC). The eIF-3 complex stimulates mRNA recruitment to the 43S PIC and scanning of the mRNA for AUG recognition. The eIF-3 complex is also required for disassembly and recycling of post-termination ribosomal complexes and subsequently prevents premature joining of the 40S and 60S ribosomal subunits prior to initiation. The eIF-3 complex specifically targets and initiates translation of a subset of mRNAs involved in cell proliferation, including cell cycling, differentiation and apoptosis, and uses different modes of RNA stem-loop binding to exert either translational activation or repression. Its function is as follows. Deubiquitinates activated NOTCH1, promoting its nuclear import, thereby acting as a positive regulator of Notch signaling. The polypeptide is Eukaryotic translation initiation factor 3 subunit F (Macaca fascicularis (Crab-eating macaque)).